Consider the following 152-residue polypeptide: MEAVLNELVSVEDLLKFERKFKSEKAAGSVSKSTQFEYAWCLVRSKYNDDIRKGLALLEELLPKGSKEEQRDYVFYLAVGNYRLKEYEKALKYVRGLLQTEPQNNQAKELERLIDKAMKKDGLVGMAIVGGMALGVAGLAGLIGLAVSKSKS.

The residue at position 1 (M1) is an N-acetylmethionine. Residues 1 to 122 (MEAVLNELVS…LIDKAMKKDG (122 aa)) are Cytoplasmic-facing. Position 10 is a phosphoserine (S10). The stretch at 71-104 (RDYVFYLAVGNYRLKEYEKALKYVRGLLQTEPQN) is one TPR repeat. The chain crosses the membrane as a helical span at residues 123–143 (LVGMAIVGGMALGVAGLAGLI). Topologically, residues 144 to 152 (GLAVSKSKS) are mitochondrial intermembrane.

This sequence belongs to the FIS1 family. Interacts with DNM1L/DLP1 through the TPR region; may form part of a larger protein complex at the endoplasmic reticulum-mitochondrial interface during mitochondrial fission. Interacts with MARCHF5. Interacts with MIEF1. Interacts with PEX11A, PEX11B and PEX11G. Ubiquitinated by MARCHF5.

Its subcellular location is the mitochondrion outer membrane. It is found in the peroxisome membrane. Its function is as follows. Involved in the fragmentation of the mitochondrial network and its perinuclear clustering. Plays a minor role in the recruitment and association of the fission mediator dynamin-related protein 1 (DNM1L) to the mitochondrial surface and mitochondrial fission. May not be essential for the assembly of functional fission complexes and the subsequent membrane scission event. Also mediates peroxisomal fission. May act when the products of fission are directed toward mitochondrial homeostasis, mitophagy, or apoptosis. Can induce cytochrome c release from the mitochondrion to the cytosol, ultimately leading to apoptosis. The protein is Mitochondrial fission 1 protein (FIS1) of Bos taurus (Bovine).